Here is a 155-residue protein sequence, read N- to C-terminus: Endoribonuclease YbeY (155 aa).

Zn(2+) is bound by residues His114, His118, and His124.

It belongs to the endoribonuclease YbeY family. Requires Zn(2+) as cofactor.

Its subcellular location is the cytoplasm. In terms of biological role, single strand-specific metallo-endoribonuclease involved in late-stage 70S ribosome quality control and in maturation of the 3' terminus of the 16S rRNA. The sequence is that of Endoribonuclease YbeY from Tolumonas auensis (strain DSM 9187 / NBRC 110442 / TA 4).